Consider the following 220-residue polypeptide: MGKAHATPQLLFGGTFNPVHNGHLVSAMAAREALGVDSVTLLPCYVPPHKTAPTIAAEHRLAMLQHVVQENNHLCIDTCELDAGESIFTVDTLAAKRELWGASASIIWLIGWDSLHNLSRWHRWQSLLTFANLAVVERPFAQSDDINSLPPAVRNWLQQHRVSAKQLTQQANGGVALLHTPRIELSSSDVRQRLGAQKSIQYMVPACVETYIRAHKLYTH.

It belongs to the NadD family.

It catalyses the reaction nicotinate beta-D-ribonucleotide + ATP + H(+) = deamido-NAD(+) + diphosphate. It participates in cofactor biosynthesis; NAD(+) biosynthesis; deamido-NAD(+) from nicotinate D-ribonucleotide: step 1/1. Catalyzes the reversible adenylation of nicotinate mononucleotide (NaMN) to nicotinic acid adenine dinucleotide (NaAD). This chain is Probable nicotinate-nucleotide adenylyltransferase, found in Saccharophagus degradans (strain 2-40 / ATCC 43961 / DSM 17024).